Reading from the N-terminus, the 157-residue chain is MRIGHGYDVHRFAEGDFITLGGVRIAHGFGLLAHSDGDVLLHALSDALLGAAALGDIGKHFPDTDPQFKGADSRVLLRHVLTLIHGKGWKVGNVDATIVAQAPKMAPHIDAMRALIAEDLQVEPDQVNVKATTTEKLGFTGREEGIAVHAVALLLRA.

Residues Asp8 and His10 each contribute to the a divalent metal cation site. 4-CDP-2-C-methyl-D-erythritol 2-phosphate is bound by residues 8–10 (DVH) and 34–35 (HS). A divalent metal cation is bound at residue His42. 4-CDP-2-C-methyl-D-erythritol 2-phosphate contacts are provided by residues 56-58 (DIG), 61-65 (FPDTD), 100-106 (AQAPKMA), 132-135 (TTTE), Phe139, and Arg142.

It belongs to the IspF family. Homotrimer. The cofactor is a divalent metal cation.

It carries out the reaction 4-CDP-2-C-methyl-D-erythritol 2-phosphate = 2-C-methyl-D-erythritol 2,4-cyclic diphosphate + CMP. It participates in isoprenoid biosynthesis; isopentenyl diphosphate biosynthesis via DXP pathway; isopentenyl diphosphate from 1-deoxy-D-xylulose 5-phosphate: step 4/6. In terms of biological role, involved in the biosynthesis of isopentenyl diphosphate (IPP) and dimethylallyl diphosphate (DMAPP), two major building blocks of isoprenoid compounds. Catalyzes the conversion of 4-diphosphocytidyl-2-C-methyl-D-erythritol 2-phosphate (CDP-ME2P) to 2-C-methyl-D-erythritol 2,4-cyclodiphosphate (ME-CPP) with a corresponding release of cytidine 5-monophosphate (CMP). This is 2-C-methyl-D-erythritol 2,4-cyclodiphosphate synthase from Pseudomonas syringae pv. syringae (strain B728a).